Consider the following 464-residue polypeptide: ATP synthase subunit beta (464 aa).

153 to 160 is a binding site for ATP; it reads GGAGVGKT.

Belongs to the ATPase alpha/beta chains family. F-type ATPases have 2 components, CF(1) - the catalytic core - and CF(0) - the membrane proton channel. CF(1) has five subunits: alpha(3), beta(3), gamma(1), delta(1), epsilon(1). CF(0) has three main subunits: a(1), b(2) and c(9-12). The alpha and beta chains form an alternating ring which encloses part of the gamma chain. CF(1) is attached to CF(0) by a central stalk formed by the gamma and epsilon chains, while a peripheral stalk is formed by the delta and b chains.

It localises to the cell inner membrane. The enzyme catalyses ATP + H2O + 4 H(+)(in) = ADP + phosphate + 5 H(+)(out). Produces ATP from ADP in the presence of a proton gradient across the membrane. The catalytic sites are hosted primarily by the beta subunits. The polypeptide is ATP synthase subunit beta (Burkholderia vietnamiensis (strain G4 / LMG 22486) (Burkholderia cepacia (strain R1808))).